We begin with the raw amino-acid sequence, 394 residues long: Elongation factor Tu (394 aa).

Residues 10 to 205 (KPHMNVGTIG…TMDNYFDLPE (196 aa)) enclose the tr-type G domain. The interval 19 to 26 (GHVDHGKT) is G1. 19 to 26 (GHVDHGKT) is a binding site for GTP. Thr-26 is a binding site for Mg(2+). The tract at residues 61-65 (GITIN) is G2. Positions 82–85 (DCPG) are G3. GTP is bound by residues 82 to 86 (DCPGH) and 137 to 140 (NKLD). The interval 137-140 (NKLD) is G4. Positions 173-175 (SAF) are G5.

Belongs to the TRAFAC class translation factor GTPase superfamily. Classic translation factor GTPase family. EF-Tu/EF-1A subfamily. As to quaternary structure, monomer.

It is found in the cytoplasm. It carries out the reaction GTP + H2O = GDP + phosphate + H(+). Functionally, GTP hydrolase that promotes the GTP-dependent binding of aminoacyl-tRNA to the A-site of ribosomes during protein biosynthesis. The polypeptide is Elongation factor Tu (Borrelia duttonii (strain Ly)).